The following is a 430-amino-acid chain: Ribosomal protein uS12 methylthiotransferase RimO (430 aa).

Positions 2 to 118 (AKIFTISLGC…IDNVIKRPKH (117 aa)) constitute an MTTase N-terminal domain. [4Fe-4S] cluster-binding residues include Cys11, Cys47, Cys81, Cys150, Cys154, and Cys157. The 233-residue stretch at 136 to 368 (LTAPHSAYLK…AQSRVIDSIN (233 aa)) folds into the Radical SAM core domain. Residues 369–430 (RKLKGKTVKV…KGYNRTGKII (62 aa)) enclose the TRAM domain.

The protein belongs to the methylthiotransferase family. RimO subfamily. Requires [4Fe-4S] cluster as cofactor.

It localises to the cytoplasm. It carries out the reaction L-aspartate(89)-[ribosomal protein uS12]-hydrogen + (sulfur carrier)-SH + AH2 + 2 S-adenosyl-L-methionine = 3-methylsulfanyl-L-aspartate(89)-[ribosomal protein uS12]-hydrogen + (sulfur carrier)-H + 5'-deoxyadenosine + L-methionine + A + S-adenosyl-L-homocysteine + 2 H(+). Catalyzes the methylthiolation of an aspartic acid residue of ribosomal protein uS12. This is Ribosomal protein uS12 methylthiotransferase RimO from Elusimicrobium minutum (strain Pei191).